An 874-amino-acid chain; its full sequence is MYMSTSEIRAAFLEYFRSQGHQVVSSSSLVPHNDPTLLFTNAGMNQFKDVFLGADKRAYNRATTSQRCVRAGGKHNDLENVGYTARHHTFFEMLGNFSFGDYFKQDAIRFAWEFLTGTLKLPKERLLVTVYETDDEAFNIWANEVGVPVERIVRIGDNKGAAFASDNFWQMSDTGPCGPCTEIFYDHGDHIWGGPPGSPEEDGDRFIEIWNVVFMQFNRQADGTMEPLPRPSVDTGMGLERISAIMQGVHSNYEIDIFQALIKKAAEIVGTTDLSNQSLRVIADHIRSCAFLIADGVMPSNEGRGYVLRRIIRRAVRHGRKLGATDVFFYKLAAELAVQMKDVGAELIAQLPLVKRVLRIEEEQFVRTLDRGLLLLEDVLANLGDAKVIPGEVVFKLYDTYGFPADLTADVVREREIGIDEEGFNAEMEKQRARAKEASSFGVNYNEVLKLDFETPFTGYKQLSQKTSVVGIYKDGVEVNGLIAGEEAVVVLAETPFYAESGGQVGDCGVLKVDDGIFAVTDTQKAGKAIIHKGYLELGTLEKGALVEAVVDGERRQAVALNHSVTHLLHAALRQALGDHVTQKGSLVGAERMRFDFSHFEGLTMATIRRVEELVNAQIRANHDIATQVMDLEAAKSAGAMALFGEKYEDDVRVVRMGDYSTELCGGTHAKRTGDIGFFKIIAESGIAAGVRRIEAVTGKGAIDFMHQMGEQIEEAAALVKGDQFSIADKVRQILDKSKMMERELEQLKAKLAAQAGSDLLSQVIEINGQKVLIAALEGADPKSLRGMLDELKNRMKSGVVLLATSSDDKVNLIAGVTSDLTGKVKAGELVNLVAQQVGGKGGGRPDMAQAGGTQPEAVPAALQSVHSWLEERL.

Zn(2+) contacts are provided by H563, H567, C665, and H669.

It belongs to the class-II aminoacyl-tRNA synthetase family. Zn(2+) serves as cofactor.

It is found in the cytoplasm. It catalyses the reaction tRNA(Ala) + L-alanine + ATP = L-alanyl-tRNA(Ala) + AMP + diphosphate. Its function is as follows. Catalyzes the attachment of alanine to tRNA(Ala) in a two-step reaction: alanine is first activated by ATP to form Ala-AMP and then transferred to the acceptor end of tRNA(Ala). Also edits incorrectly charged Ser-tRNA(Ala) and Gly-tRNA(Ala) via its editing domain. The protein is Alanine--tRNA ligase of Aeromonas salmonicida (strain A449).